A 4499-amino-acid polypeptide reads, in one-letter code: Dynein alpha chain, flagellar outer arm (4499 aa).

The stem stretch occupies residues 1 to 1677; sequence MSIFWEVPNA…RIRICDASFP (1677 aa). Kelch repeat units follow at residues 29–84, 86–135, 137–183, 199–245, 253–304, and 307–358; these read RFVL…ALDD, RLLV…RFGS, VFIF…RFDH, KLLI…VCDG, KVFS…FDVK, and SLLI…IRGL. Residues 425 to 534 form a Filamin repeat; it reads FANTAARNCI…IRGSPFTVKC (110 aa). Kelch repeat units lie at residues 562–608 and 610–661; these read ELVL…VLSD and ELVV…AVSA. Positions 653–720 are disordered; sequence PKGAAAVSAE…SRPVSAKPAP (68 aa). Positions 655–689 are enriched in low complexity; sequence GAAAVSAEPSAEPAAEPAAEPAAEPDADAPAAEPA. Residues 690 to 705 show a composition bias toward acidic residues; sequence AEGEEGAVPAEGEEGA. Kelch repeat units follow at residues 750–801 and 864–913; these read LYVM…ATGN and KLFL…TLSG. Coiled-coil stretches lie at residues 1261 to 1334 and 1382 to 1450; these read ELHK…MIAN and KKEL…RRAF. 2 AAA regions span residues 1678 to 1921 and 1981 to 2225; these read YGYE…VLVV and DVIV…KSYS. Residues 1716–1723 and 2019–2026 contribute to the ATP site; these read GPAGTGKT and GPTGTGRT. Residues 2269-2317 form a Kelch 11 repeat; sequence MIWAFGGGLVEKDGIPYRRNFDKWFKQTWTTVKIPGKGTVYDYFVNPKT. AAA stretches follow at residues 2331 to 2577 and 2679 to 2928; these read DYDG…VFQG and EYNE…ERRY. Residue 2369–2376 coordinates ATP; that stretch reads GGAGVGKT. Residues 2655 to 2688 adopt a coiled-coil conformation; that stretch reads LADKAYDEVADYTSLYKTLTEALNEYNETNAAMD. Residue 2717–2724 participates in ATP binding; that stretch reads GVGGSGKQ. A coiled-coil region spans residues 3003–3023; the sequence is VGVEKEKVNAENAAAQVEAEK. Positions 3003–3262 are stalk; the sequence is VGVEKEKVNA…ERWALTVEQL (260 aa). The stretch at 3070–3117 is one Kelch 12 repeat; the sequence is LKKPPPGVDDITAVVIILLENNPKDKSWQAAQKLMNNVDKFLERVKSF. Coiled coils occupy residues 3170 to 3262 and 3486 to 3515; these read DVVQ…VEQL and NKER…ELED. The interval 3320–3550 is AAA 5; it reads LVDDALVAGW…AKRVSTEISE (231 aa). The interval 3614–3687 is disordered; that stretch reads GRKKGKGLKK…VGDAEDEDDE (74 aa). Residues 3630–3653 show a composition bias toward basic and acidic residues; the sequence is QPMDHQSLMEKARRSSGVGDRRPS. Residues 3843–4082 form an AAA 6 region; it reads LQNFCEHMMG…LTTCGDVLYN (240 aa).

This sequence belongs to the dynein heavy chain family. As to quaternary structure, consists of at least 3 heavy chains (alpha, beta and gamma), 2 intermediate chains and 8 light chains.

Its subcellular location is the cell projection. The protein localises to the cilium. The protein resides in the flagellum. It localises to the cytoplasm. It is found in the cytoskeleton. Its subcellular location is the flagellum axoneme. Its function is as follows. Force generating protein of eukaryotic cilia and flagella. Produces force towards the minus ends of microtubules. Dynein has ATPase activity; the force-producing power stroke is thought to occur on release of ADP. In Chlamydomonas reinhardtii (Chlamydomonas smithii), this protein is Dynein alpha chain, flagellar outer arm (ODA11).